Consider the following 240-residue polypeptide: Enolase-phosphatase E1 (240 aa).

The Mg(2+) site is built by Asp9 and Glu11. Substrate is bound by residues 129–130 (SS) and Lys168. Asp195 contributes to the Mg(2+) binding site.

The protein belongs to the HAD-like hydrolase superfamily. MasA/MtnC family. Monomer. It depends on Mg(2+) as a cofactor.

The protein resides in the cytoplasm. Its subcellular location is the nucleus. It carries out the reaction 5-methylsulfanyl-2,3-dioxopentyl phosphate + H2O = 1,2-dihydroxy-5-(methylsulfanyl)pent-1-en-3-one + phosphate. Its pathway is amino-acid biosynthesis; L-methionine biosynthesis via salvage pathway; L-methionine from S-methyl-5-thio-alpha-D-ribose 1-phosphate: step 3/6. It participates in amino-acid biosynthesis; L-methionine biosynthesis via salvage pathway; L-methionine from S-methyl-5-thio-alpha-D-ribose 1-phosphate: step 4/6. In terms of biological role, bifunctional enzyme that catalyzes the enolization of 2,3-diketo-5-methylthiopentyl-1-phosphate (DK-MTP-1-P) into the intermediate 2-hydroxy-3-keto-5-methylthiopentenyl-1-phosphate (HK-MTPenyl-1-P), which is then dephosphorylated to form the acireductone 1,2-dihydroxy-3-keto-5-methylthiopentene (DHK-MTPene). This chain is Enolase-phosphatase E1, found in Candida tropicalis (strain ATCC MYA-3404 / T1) (Yeast).